The sequence spans 634 residues: Ankyrin repeat protein OPG025 (634 aa).

ANK repeat units follow at residues 36-69 (DGET…YKNI), 70-100 (NDFD…EINS), 103-134 (NGIN…PTCS), 175-211 (MGKT…EMRY), 307-337 (IQDL…TLYR), and 412-441 (HGCS…DINI).

The protein belongs to the orthopoxvirus OPG025 family. Interacts with components of host SCF complex CUL1 and SKP1 and components of the cullin deneddylation/COP9 signalosome complex subunits COPS7A and COPS7B.

Functionally, plays a role in the inhibition of host immune repsonse by counteracting the action of interferons on early events in the viral replication cycle. The sequence is that of Ankyrin repeat protein OPG025 (OPG035) from Vaccinia virus (strain Western Reserve) (VACV).